A 153-amino-acid chain; its full sequence is Ribosome maturation factor RimP (153 aa).

Belongs to the RimP family.

It is found in the cytoplasm. Its function is as follows. Required for maturation of 30S ribosomal subunits. This chain is Ribosome maturation factor RimP, found in Marinomonas sp. (strain MWYL1).